The sequence spans 308 residues: Porphobilinogen deaminase (308 aa).

Position 243 is an S-(dipyrrolylmethanemethyl)cysteine (Cys243).

It belongs to the HMBS family. As to quaternary structure, monomer. Dipyrromethane is required as a cofactor.

It catalyses the reaction 4 porphobilinogen + H2O = hydroxymethylbilane + 4 NH4(+). It functions in the pathway porphyrin-containing compound metabolism; protoporphyrin-IX biosynthesis; coproporphyrinogen-III from 5-aminolevulinate: step 2/4. Functionally, tetrapolymerization of the monopyrrole PBG into the hydroxymethylbilane pre-uroporphyrinogen in several discrete steps. The sequence is that of Porphobilinogen deaminase from Mesorhizobium japonicum (strain LMG 29417 / CECT 9101 / MAFF 303099) (Mesorhizobium loti (strain MAFF 303099)).